Reading from the N-terminus, the 198-residue chain is Dephospho-CoA kinase (198 aa).

A DPCK domain is found at 2–90 (LIAIVGKPGV…KLSLVTKPLL (89 aa)). ATP is bound at residue 10 to 15 (GVGKTS).

It belongs to the CoaE family.

Its subcellular location is the cytoplasm. The enzyme catalyses 3'-dephospho-CoA + ATP = ADP + CoA + H(+). Its pathway is cofactor biosynthesis; coenzyme A biosynthesis; CoA from (R)-pantothenate: step 5/5. Functionally, catalyzes the phosphorylation of the 3'-hydroxyl group of dephosphocoenzyme A to form coenzyme A. The chain is Dephospho-CoA kinase from Mycoplasma genitalium (strain ATCC 33530 / DSM 19775 / NCTC 10195 / G37) (Mycoplasmoides genitalium).